The following is a 445-amino-acid chain: Phosphoglucosamine mutase (445 aa).

S99 (phosphoserine intermediate) is an active-site residue. Mg(2+) contacts are provided by S99, D242, D244, and D246. The residue at position 99 (S99) is a Phosphoserine.

It belongs to the phosphohexose mutase family. Mg(2+) is required as a cofactor. In terms of processing, activated by phosphorylation.

The enzyme catalyses alpha-D-glucosamine 1-phosphate = D-glucosamine 6-phosphate. Functionally, catalyzes the conversion of glucosamine-6-phosphate to glucosamine-1-phosphate. The chain is Phosphoglucosamine mutase from Helicobacter pylori (strain P12).